A 230-amino-acid chain; its full sequence is 3-beta-hydroxysteroid-Delta(8),Delta(7)-isomerase (230 aa).

T2 carries the post-translational modification N-acetylthreonine. A run of 4 helical transmembrane segments spans residues 29–49 (WHILVGLFSFSGVLIVITWLL), 66–86 (LCWFAVCTFIHLVIEGWFSFY), 121–141 (MESVTACLWGPLSLWVVIAFL), and 185–205 (FWFYFVIMNAIWLVIPGILVF). Positions 61-204 (GRRLALCWFA…IWLVIPGILV (144 aa)) constitute an EXPERA domain.

The protein belongs to the EBP family. In terms of tissue distribution, expressed in liver.

The protein localises to the endoplasmic reticulum membrane. It localises to the nucleus envelope. The protein resides in the cytoplasmic vesicle. It catalyses the reaction lathosterol = 5alpha-cholest-8-en-3beta-ol. The catalysed reaction is zymosterol = 5alpha-cholesta-7,24-dien-3beta-ol. The enzyme catalyses 5,6alpha-epoxy-5alpha-cholestan-3beta-ol + H2O = 5alpha-cholestane-3beta,5,6beta-triol. It carries out the reaction 5,6beta-epoxy-5beta-cholestan-3beta-ol + H2O = 5alpha-cholestane-3beta,5,6beta-triol. It functions in the pathway steroid biosynthesis; cholesterol biosynthesis. Its activity is regulated as follows. Enzymatic activity is induced by 25-hydroxycholesterol, cholestyramine and lovastatin. Functionally, isomerase that catalyzes the conversion of Delta(8)-sterols to their corresponding Delta(7)-isomers. Its function is as follows. Component of the microsomal antiestrogen binding site (AEBS), a multiproteic complex at the ER membrane that consists of an association between EBP and 7-dehydrocholesterol reductase/DHCR7. This complex is responsible for cholesterol-5,6-epoxide hydrolase (ChEH) activity, which consists in the hydration of cholesterol-5,6-epoxides (5,6-EC) into cholestane-3beta,5alpha,6beta-triol (CT). The precise role of each component of this complex has not been described yet. This is 3-beta-hydroxysteroid-Delta(8),Delta(7)-isomerase from Rattus norvegicus (Rat).